The primary structure comprises 436 residues: GTPase Der (436 aa).

EngA-type G domains follow at residues 3–168 and 177–352; these read PLVA…EEKS and IRLA…EQRS. GTP-binding positions include 9-16, 56-60, 120-123, 183-190, 230-234, and 295-298; these read GRPNVGKS, DTGGY, NKVE, DTAGL, and NKWD. The 84-residue stretch at 353–436 folds into the KH-like domain; sequence QQITTSDLNR…VPFSLRFMQK (84 aa).

This sequence belongs to the TRAFAC class TrmE-Era-EngA-EngB-Septin-like GTPase superfamily. EngA (Der) GTPase family. In terms of assembly, associates with the 50S ribosomal subunit.

Functionally, GTPase that plays an essential role in the late steps of ribosome biogenesis. The protein is GTPase Der of Prosthecochloris aestuarii (strain DSM 271 / SK 413).